The primary structure comprises 54 residues: Protein P32 (54 aa).

A helical membrane pass occupies residues 4 to 24 (FGKTLITIVTAIIGVAIIAVI).

The protein resides in the virion membrane. Its function is as follows. Component of the phage injection machinery. Required for DNA injection in the membrane transformation event. Involved in the formation of the membrane tail tube to connect the virus interior with the host cytosol. Essential for viral infectivity. The polypeptide is Protein P32 (XXXII) (Enterobacteria phage PRD1 (Bacteriophage PRD1)).